The following is a 344-amino-acid chain: S-adenosylmethionine:tRNA ribosyltransferase-isomerase (344 aa).

It belongs to the QueA family. Monomer.

Its subcellular location is the cytoplasm. The enzyme catalyses 7-aminomethyl-7-carbaguanosine(34) in tRNA + S-adenosyl-L-methionine = epoxyqueuosine(34) in tRNA + adenine + L-methionine + 2 H(+). It functions in the pathway tRNA modification; tRNA-queuosine biosynthesis. In terms of biological role, transfers and isomerizes the ribose moiety from AdoMet to the 7-aminomethyl group of 7-deazaguanine (preQ1-tRNA) to give epoxyqueuosine (oQ-tRNA). This chain is S-adenosylmethionine:tRNA ribosyltransferase-isomerase, found in Lactiplantibacillus plantarum (strain ATCC BAA-793 / NCIMB 8826 / WCFS1) (Lactobacillus plantarum).